The following is a 435-amino-acid chain: 3-phosphoshikimate 1-carboxyvinyltransferase (435 aa).

3-phosphoshikimate is bound by residues K25, S26, and R30. A phosphoenolpyruvate-binding site is contributed by K25. G99 and R130 together coordinate phosphoenolpyruvate. 3-phosphoshikimate contacts are provided by S176, S177, Q178, S204, D319, N342, and K346. Q178 provides a ligand contact to phosphoenolpyruvate. Residue D319 is the Proton acceptor of the active site. Phosphoenolpyruvate is bound by residues R350, R394, and K419.

Belongs to the EPSP synthase family. In terms of assembly, monomer.

It is found in the cytoplasm. The catalysed reaction is 3-phosphoshikimate + phosphoenolpyruvate = 5-O-(1-carboxyvinyl)-3-phosphoshikimate + phosphate. Its pathway is metabolic intermediate biosynthesis; chorismate biosynthesis; chorismate from D-erythrose 4-phosphate and phosphoenolpyruvate: step 6/7. Catalyzes the transfer of the enolpyruvyl moiety of phosphoenolpyruvate (PEP) to the 5-hydroxyl of shikimate-3-phosphate (S3P) to produce enolpyruvyl shikimate-3-phosphate and inorganic phosphate. The polypeptide is 3-phosphoshikimate 1-carboxyvinyltransferase (Haemophilus ducreyi (strain 35000HP / ATCC 700724)).